A 554-amino-acid polypeptide reads, in one-letter code: Aspartyl/glutamyl-tRNA(Asn/Gln) amidotransferase subunit B (554 aa).

The interval 491 to 554 is disordered; it reads AEQPTAPPPE…TPVSHQDAHA (64 aa). A compositionally biased stretch (low complexity) spans 502–540; the sequence is ESAAETPEAPPAVEDAPPEAPTEAITAEAGSAEAITAAS.

This sequence belongs to the GatB/GatE family. GatB subfamily. Heterotrimer of A, B and C subunits.

It carries out the reaction L-glutamyl-tRNA(Gln) + L-glutamine + ATP + H2O = L-glutaminyl-tRNA(Gln) + L-glutamate + ADP + phosphate + H(+). The enzyme catalyses L-aspartyl-tRNA(Asn) + L-glutamine + ATP + H2O = L-asparaginyl-tRNA(Asn) + L-glutamate + ADP + phosphate + 2 H(+). In terms of biological role, allows the formation of correctly charged Asn-tRNA(Asn) or Gln-tRNA(Gln) through the transamidation of misacylated Asp-tRNA(Asn) or Glu-tRNA(Gln) in organisms which lack either or both of asparaginyl-tRNA or glutaminyl-tRNA synthetases. The reaction takes place in the presence of glutamine and ATP through an activated phospho-Asp-tRNA(Asn) or phospho-Glu-tRNA(Gln). This chain is Aspartyl/glutamyl-tRNA(Asn/Gln) amidotransferase subunit B, found in Gloeobacter violaceus (strain ATCC 29082 / PCC 7421).